The following is a 491-amino-acid chain: MKERKVIIKTGLNLENSYTSLPEIFFTRQSPSRVPSPKLAVLNYSLITSLGLNAQVLQSADGVEILAGNKTPEEAIPISQAYAGHQFGHFTMLGDGRAILLGEHITPQGERFDIQLKGSGKTPYSRGGDGKAALGPMLREYIISEAMNALGIPTTRSLAVVTTGESIMRETELSGAILTRVAASHIRVGTFEYVSRWGTVEELRALANYTLQRHFKKGYDKENPYLFLLQEVIEKQAELIAKWQLVGFVHGVMNTDNMTISGETIDYGPCAFMDVYDPETVFSSIDIYGRYAYGNQPNIATWNLARFAETLLPLLHINPNEAIKIAENAVSDFTKLYKNNWLSGMRAKLGIFNEELEDEYLIEDLLSIMHKYGADYTNTFRALTFDNIEDTVLGGKVEFDKWYKLWQERLTRQEEAKLSSKQLMKSSNPSVIPRNHRVEEALEAAVKEGDYSVMEKLLDALSKPYDHSKEQDYYSKLPEPSTCPYQTYCGT.

8 residues coordinate ATP: glycine 94, glycine 96, arginine 97, lysine 117, aspartate 129, glycine 130, arginine 180, and arginine 187. Aspartate 256 serves as the catalytic Proton acceptor. 2 residues coordinate Mg(2+): asparagine 257 and aspartate 266. Aspartate 266 lines the ATP pocket.

This sequence belongs to the SELO family. Mg(2+) is required as a cofactor. Mn(2+) serves as cofactor.

The enzyme catalyses L-seryl-[protein] + ATP = 3-O-(5'-adenylyl)-L-seryl-[protein] + diphosphate. The catalysed reaction is L-threonyl-[protein] + ATP = 3-O-(5'-adenylyl)-L-threonyl-[protein] + diphosphate. It catalyses the reaction L-tyrosyl-[protein] + ATP = O-(5'-adenylyl)-L-tyrosyl-[protein] + diphosphate. It carries out the reaction L-histidyl-[protein] + UTP = N(tele)-(5'-uridylyl)-L-histidyl-[protein] + diphosphate. The enzyme catalyses L-seryl-[protein] + UTP = O-(5'-uridylyl)-L-seryl-[protein] + diphosphate. The catalysed reaction is L-tyrosyl-[protein] + UTP = O-(5'-uridylyl)-L-tyrosyl-[protein] + diphosphate. Nucleotidyltransferase involved in the post-translational modification of proteins. It can catalyze the addition of adenosine monophosphate (AMP) or uridine monophosphate (UMP) to a protein, resulting in modifications known as AMPylation and UMPylation. This is Protein nucleotidyltransferase YdiU from Clostridium botulinum (strain ATCC 19397 / Type A).